Reading from the N-terminus, the 353-residue chain is UDP-3-O-acylglucosamine N-acyltransferase (353 aa).

H242 acts as the Proton acceptor in catalysis.

This sequence belongs to the transferase hexapeptide repeat family. LpxD subfamily. Homotrimer.

It catalyses the reaction a UDP-3-O-[(3R)-3-hydroxyacyl]-alpha-D-glucosamine + a (3R)-hydroxyacyl-[ACP] = a UDP-2-N,3-O-bis[(3R)-3-hydroxyacyl]-alpha-D-glucosamine + holo-[ACP] + H(+). It participates in bacterial outer membrane biogenesis; LPS lipid A biosynthesis. Functionally, catalyzes the N-acylation of UDP-3-O-acylglucosamine using 3-hydroxyacyl-ACP as the acyl donor. Is involved in the biosynthesis of lipid A, a phosphorylated glycolipid that anchors the lipopolysaccharide to the outer membrane of the cell. The sequence is that of UDP-3-O-acylglucosamine N-acyltransferase from Pseudomonas paraeruginosa (strain DSM 24068 / PA7) (Pseudomonas aeruginosa (strain PA7)).